A 389-amino-acid polypeptide reads, in one-letter code: Putative serine/threonine-protein kinase (389 aa).

Residues 15–356 (YRIEKLINRG…LMVSNYLPWY (342 aa)) enclose the Protein kinase domain. The active-site Proton acceptor is the aspartate 164.

The protein belongs to the protein kinase superfamily. Ser/Thr protein kinase family.

It carries out the reaction L-seryl-[protein] + ATP = O-phospho-L-seryl-[protein] + ADP + H(+). The catalysed reaction is L-threonyl-[protein] + ATP = O-phospho-L-threonyl-[protein] + ADP + H(+). This Mycoplasma pneumoniae (strain ATCC 29342 / M129 / Subtype 1) (Mycoplasmoides pneumoniae) protein is Putative serine/threonine-protein kinase.